The primary structure comprises 93 residues: Pyrimidine/purine nucleoside phosphorylase (93 aa).

This sequence belongs to the nucleoside phosphorylase PpnP family.

The catalysed reaction is a purine D-ribonucleoside + phosphate = a purine nucleobase + alpha-D-ribose 1-phosphate. It catalyses the reaction adenosine + phosphate = alpha-D-ribose 1-phosphate + adenine. It carries out the reaction cytidine + phosphate = cytosine + alpha-D-ribose 1-phosphate. The enzyme catalyses guanosine + phosphate = alpha-D-ribose 1-phosphate + guanine. The catalysed reaction is inosine + phosphate = alpha-D-ribose 1-phosphate + hypoxanthine. It catalyses the reaction thymidine + phosphate = 2-deoxy-alpha-D-ribose 1-phosphate + thymine. It carries out the reaction uridine + phosphate = alpha-D-ribose 1-phosphate + uracil. The enzyme catalyses xanthosine + phosphate = alpha-D-ribose 1-phosphate + xanthine. Its function is as follows. Catalyzes the phosphorolysis of diverse nucleosides, yielding D-ribose 1-phosphate and the respective free bases. Can use uridine, adenosine, guanosine, cytidine, thymidine, inosine and xanthosine as substrates. Also catalyzes the reverse reactions. The polypeptide is Pyrimidine/purine nucleoside phosphorylase (Cellvibrio japonicus (strain Ueda107) (Pseudomonas fluorescens subsp. cellulosa)).